Here is a 64-residue protein sequence, read N- to C-terminus: uncharacterized protein (64 aa).

Residues 30 to 52 (FYAIFEMLFWPLVSLISVGLLGE) form a helical membrane-spanning segment.

The protein resides in the membrane. This is an uncharacterized protein from Archaeoglobus fulgidus (strain ATCC 49558 / DSM 4304 / JCM 9628 / NBRC 100126 / VC-16).